The following is a 193-amino-acid chain: UMP-CMP kinase (193 aa).

13 to 18 (GAGKGT) is an ATP binding site. The segment at 33–63 (SAGDLLRDERKKPDSQYGELIESYIRDGKIV) is NMP. Residues Arg-39, 61–63 (KIV), and 93–96 (GFPR) each bind a ribonucleoside 5'-phosphate. Asn-100 is a CMP binding site. Residues 133 to 143 (ERGKSSGRSDD) are LID. An ATP-binding site is contributed by Arg-134. The a ribonucleoside 5'-phosphate site is built by Arg-140 and Arg-151. ATP is bound at residue Lys-179.

Belongs to the adenylate kinase family. UMP-CMP kinase subfamily. As to quaternary structure, monomer. The cofactor is Mg(2+).

It localises to the nucleus. Its subcellular location is the cytoplasm. It catalyses the reaction CMP + ATP = CDP + ADP. The enzyme catalyses dCMP + ATP = dCDP + ADP. It carries out the reaction UMP + ATP = UDP + ADP. The catalysed reaction is a 2'-deoxyribonucleoside 5'-diphosphate + ATP = a 2'-deoxyribonucleoside 5'-triphosphate + ADP. It catalyses the reaction a ribonucleoside 5'-diphosphate + ATP = a ribonucleoside 5'-triphosphate + ADP. In terms of biological role, catalyzes the phosphorylation of pyrimidine nucleoside monophosphates at the expense of ATP. Plays an important role in de novo pyrimidine nucleotide biosynthesis. Has preference for UMP and CMP as phosphate acceptors. Also displays broad nucleoside diphosphate kinase activity. This is UMP-CMP kinase (cmpk1) from Xenopus laevis (African clawed frog).